The primary structure comprises 447 residues: Probable glycine dehydrogenase (decarboxylating) subunit 1 (447 aa).

The protein belongs to the GcvP family. N-terminal subunit subfamily. The glycine cleavage system is composed of four proteins: P, T, L and H. In this organism, the P 'protein' is a heterodimer of two subunits.

It catalyses the reaction N(6)-[(R)-lipoyl]-L-lysyl-[glycine-cleavage complex H protein] + glycine + H(+) = N(6)-[(R)-S(8)-aminomethyldihydrolipoyl]-L-lysyl-[glycine-cleavage complex H protein] + CO2. In terms of biological role, the glycine cleavage system catalyzes the degradation of glycine. The P protein binds the alpha-amino group of glycine through its pyridoxal phosphate cofactor; CO(2) is released and the remaining methylamine moiety is then transferred to the lipoamide cofactor of the H protein. This chain is Probable glycine dehydrogenase (decarboxylating) subunit 1, found in Bacillus cereus (strain G9842).